A 514-amino-acid chain; its full sequence is Glutamyl-tRNA(Gln) amidotransferase subunit A (514 aa).

Active-site charge relay system residues include lysine 76 and serine 151. The active-site Acyl-ester intermediate is serine 175.

It belongs to the amidase family. GatA subfamily. In terms of assembly, heterotrimer of A, B and C subunits.

It carries out the reaction L-glutamyl-tRNA(Gln) + L-glutamine + ATP + H2O = L-glutaminyl-tRNA(Gln) + L-glutamate + ADP + phosphate + H(+). In terms of biological role, allows the formation of correctly charged Gln-tRNA(Gln) through the transamidation of misacylated Glu-tRNA(Gln) in organisms which lack glutaminyl-tRNA synthetase. The reaction takes place in the presence of glutamine and ATP through an activated gamma-phospho-Glu-tRNA(Gln). This is Glutamyl-tRNA(Gln) amidotransferase subunit A from Salinibacter ruber (strain DSM 13855 / M31).